Reading from the N-terminus, the 166-residue chain is Zinc finger CCHC domain-containing protein 13 (166 aa).

The CCHC-type 1; degenerate zinc finger occupies 4–21 (KDFFACGHSGHWARGCPR). The segment at 45 to 62 (YTCYCCGESGRNAKNCVL) adopts a CCHC-type 2; degenerate zinc-finger fold. CCHC-type zinc fingers lie at residues 65-82 (NICY…DCKD), 89-106 (QHCY…DCDR), 110-127 (QKCY…DCAQ), and 128-145 (VKCY…NCSK).

The chain is Zinc finger CCHC domain-containing protein 13 (ZCCHC13) from Homo sapiens (Human).